The primary structure comprises 241 residues: Uridylate kinase (241 aa).

ATP-binding positions include 10-13 (KLSG), Gly-53, and Arg-57. UMP-binding positions include Asp-72 and 133-140 (AGSPYFST). Residues Asn-161, Tyr-167, and Asp-170 each contribute to the ATP site.

This sequence belongs to the UMP kinase family. As to quaternary structure, homohexamer.

It is found in the cytoplasm. It carries out the reaction UMP + ATP = UDP + ADP. The protein operates within pyrimidine metabolism; CTP biosynthesis via de novo pathway; UDP from UMP (UMPK route): step 1/1. Its activity is regulated as follows. Inhibited by UTP. Functionally, catalyzes the reversible phosphorylation of UMP to UDP. The polypeptide is Uridylate kinase (Aster yellows witches'-broom phytoplasma (strain AYWB)).